A 192-amino-acid chain; its full sequence is uncharacterized protein (192 aa).

The Nudix hydrolase domain maps to 29 to 160; that stretch reads QRQAAVLIPV…PLDVYRRGNS (132 aa). Positions 67 to 89 match the Nudix box motif; that stretch reads GAVDSTDASLIAAALREAQEEVA. Positions 83 and 87 each coordinate Mg(2+).

Belongs to the Nudix hydrolase family. PCD1 subfamily. It depends on Mn(2+) as a cofactor. Mg(2+) is required as a cofactor.

Its function is as follows. Probably mediates the hydrolysis of some nucleoside diphosphate derivatives. This is an uncharacterized protein from Salmonella newport (strain SL254).